We begin with the raw amino-acid sequence, 1329 residues long: Putative protein tag-53 (1329 aa).

The 28-residue stretch at 65–92 (SCDKPCYNGVCLNKACVCSKGWYGSQCD) folds into the EGF-like 1 domain. 5 disulfides stabilise this stretch: cysteine 66-cysteine 75, cysteine 70-cysteine 80, cysteine 82-cysteine 91, cysteine 94-cysteine 120, and cysteine 144-cysteine 166. The CUB domain maps to 94–203 (CFGRIRISDN…NGFNVSYESN (110 aa)). Residue asparagine 103 is glycosylated (N-linked (GlcNAc...) asparagine). Residues asparagine 197 and asparagine 208 are each glycosylated (N-linked (GlcNAc...) asparagine). EGF-like domains are found at residues 204-232 (RCAY…LNCE) and 235-270 (VCQL…ETCQ). Intrachain disulfides connect cysteine 205–cysteine 215, cysteine 209–cysteine 220, cysteine 222–cysteine 231, cysteine 236–cysteine 252, cysteine 247–cysteine 257, and cysteine 259–cysteine 269. 6 Kelch repeats span residues 302–353 (VVWS…KYKN), 355–408 (LYMF…VAGH), 416–463 (EMFV…AVEY), 471–518 (AILV…YLNG), 520–575 (MVVV…VIGQ), and 577–619 (LYAL…KCVF). N-linked (GlcNAc...) asparagine glycans are attached at residues asparagine 324, asparagine 395, asparagine 447, asparagine 481, asparagine 529, and asparagine 555. N-linked (GlcNAc...) asparagine glycosylation occurs at asparagine 820. A glycan (N-linked (GlcNAc...) asparagine; atypical) is linked at asparagine 832. Residues asparagine 833 and asparagine 934 are each glycosylated (N-linked (GlcNAc...) asparagine). 8 disulfides stabilise this stretch: cysteine 945-cysteine 953, cysteine 947-cysteine 968, cysteine 971-cysteine 980, cysteine 983-cysteine 997, cysteine 1000-cysteine 1009, cysteine 1002-cysteine 1016, cysteine 1018-cysteine 1028, and cysteine 1031-cysteine 1045. 2 Laminin EGF-like domains span residues 945-999 (CQCN…VCSP) and 1000-1047 (CDCH…PCFY). The region spanning 952–998 (TCFTSVGSFPPVTIEKCQSCQNHTTGAHCERCAPGFYGDARNGGVCS) is the EGF-like 4 domain. The N-linked (GlcNAc...) asparagine glycan is linked to asparagine 973. 3 N-linked (GlcNAc...) asparagine glycosylation sites follow: asparagine 1066, asparagine 1102, and asparagine 1147. The helical transmembrane segment at 1176 to 1196 (VLFFVIFAACFIVLLVVAGLL) threads the bilayer. At 1197-1329 (WMIKVRIEAY…TIRQRPNNND (133 aa)) the chain is on the cytoplasmic side.

It localises to the membrane. This chain is Putative protein tag-53 (tag-53), found in Caenorhabditis elegans.